The chain runs to 220 residues: Deoxyribose-phosphate aldolase 1 (220 aa).

Asp89 functions as the Proton donor/acceptor in the catalytic mechanism. Lys151 (schiff-base intermediate with acetaldehyde) is an active-site residue. Lys180 serves as the catalytic Proton donor/acceptor.

The protein belongs to the DeoC/FbaB aldolase family. DeoC type 1 subfamily.

Its subcellular location is the cytoplasm. The enzyme catalyses 2-deoxy-D-ribose 5-phosphate = D-glyceraldehyde 3-phosphate + acetaldehyde. Its pathway is carbohydrate degradation; 2-deoxy-D-ribose 1-phosphate degradation; D-glyceraldehyde 3-phosphate and acetaldehyde from 2-deoxy-alpha-D-ribose 1-phosphate: step 2/2. Its function is as follows. Catalyzes a reversible aldol reaction between acetaldehyde and D-glyceraldehyde 3-phosphate to generate 2-deoxy-D-ribose 5-phosphate. This is Deoxyribose-phosphate aldolase 1 from Staphylococcus aureus (strain COL).